Reading from the N-terminus, the 156-residue chain is Transcription antitermination protein NusB (156 aa).

The protein belongs to the NusB family.

Functionally, involved in transcription antitermination. Required for transcription of ribosomal RNA (rRNA) genes. Binds specifically to the boxA antiterminator sequence of the ribosomal RNA (rrn) operons. The chain is Transcription antitermination protein NusB from Xanthomonas oryzae pv. oryzae (strain MAFF 311018).